The sequence spans 679 residues: MSEPRQILVTSALPYANGSIHLGHMLEYIQTDMWVRFQKLRGNQCIYVCADDAHGSAIMLRAEKEGITPEQLIANVQAEHSSDFADFLVDFDNFHSTHSDENRELSSLIYSRLREAGHIATRSVTQYFDPEKGMFLADRFIKGTCPKCAAEDQYGDNCEKCGATYAPTELKNPKSAISGATPVLRDSQHFFFKLPDFQAMLQQWTRSGTLQDAVANKLAEWLDSGLQEWDISRDAPYFGFEIPGEPGKYFYVWLDAPIGYMASFKNLCARRPELDFDAFWHEGSKAELYHFIGKDIVNFHALFWPAMLEGAGFRKPTAVNVHGYLTVNGAKMSKSRGTFIKARTYLDHLQPEYLRYYYAAKLGRGVDDLDLNLEDFVQKVNSDLVGKVVNIASRCAGFIHKGNEGVMVGGDAAPELTEAFLAAAPSIAEAYEARDFGRAMREIMALADRANAWIADKAPWSLAKQEGKQDEVQAICAQGINLFRQLVIFLKPVLPVLAADAEAFLNVAPLTWNDHLTRLENHQLNPFKALMSRIEPAKVEAMVAASKEDLLAAEAKAPAGNGELAKDPLSAEIEFDTFAAVDLRVALIVKAEAVAGADKLLQLTLDIGDERRNVFSGIKSAYPDPSKLEGRLTMMVANLKPRKMRFGVSEGMVMAAGPGGEEIYLLSPDSGAKPGQRIK.

A 'HIGH' region motif is present at residues 14–24 (PYANGSIHLGH). Residues C145, C148, C158, and C161 each contribute to the Zn(2+) site. A 'KMSKS' region motif is present at residues 331-335 (KMSKS). Residue K334 coordinates ATP. Residues 577-679 (TFAAVDLRVA…SGAKPGQRIK (103 aa)) form the tRNA-binding domain.

Belongs to the class-I aminoacyl-tRNA synthetase family. MetG type 1 subfamily. Homodimer. Requires Zn(2+) as cofactor.

Its subcellular location is the cytoplasm. It catalyses the reaction tRNA(Met) + L-methionine + ATP = L-methionyl-tRNA(Met) + AMP + diphosphate. Its function is as follows. Is required not only for elongation of protein synthesis but also for the initiation of all mRNA translation through initiator tRNA(fMet) aminoacylation. This chain is Methionine--tRNA ligase, found in Pseudomonas putida (strain ATCC 47054 / DSM 6125 / CFBP 8728 / NCIMB 11950 / KT2440).